We begin with the raw amino-acid sequence, 253 residues long: Flap endonuclease Xni (253 aa).

Asp104 provides a ligand contact to Mg(2+). Residues Val160 to Asn250 enclose the 5'-3' exonuclease domain. K(+) is bound by residues Leu171, Ala172, Pro180, Ile182, and Ile185. The interval Gly184–Thr189 is interaction with DNA.

Belongs to the Xni family. Mg(2+) is required as a cofactor. The cofactor is K(+).

Its function is as follows. Has flap endonuclease activity. During DNA replication, flap endonucleases cleave the 5'-overhanging flap structure that is generated by displacement synthesis when DNA polymerase encounters the 5'-end of a downstream Okazaki fragment. This chain is Flap endonuclease Xni, found in Edwardsiella ictaluri (strain 93-146).